Consider the following 389-residue polypeptide: tRNA-specific 2-thiouridylase MnmA (389 aa).

ATP is bound by residues 21 to 28 (AMSGGVDS) and leucine 47. The Nucleophile role is filled by cysteine 115. A disulfide bond links cysteine 115 and cysteine 212. Glycine 139 contributes to the ATP binding site. The segment at 162–164 (RDQ) is interaction with tRNA. The active-site Cysteine persulfide intermediate is cysteine 212.

This sequence belongs to the MnmA/TRMU family.

The protein resides in the cytoplasm. It carries out the reaction S-sulfanyl-L-cysteinyl-[protein] + uridine(34) in tRNA + AH2 + ATP = 2-thiouridine(34) in tRNA + L-cysteinyl-[protein] + A + AMP + diphosphate + H(+). In terms of biological role, catalyzes the 2-thiolation of uridine at the wobble position (U34) of tRNA, leading to the formation of s(2)U34. The sequence is that of tRNA-specific 2-thiouridylase MnmA from Xanthobacter autotrophicus (strain ATCC BAA-1158 / Py2).